A 265-amino-acid chain; its full sequence is S-antigen protein (265 aa).

Positions methionine 1–glycine 23 are cleaved as a signal peptide. The disordered stretch occupies residues aspartate 59–isoleucine 265. A compositionally biased stretch (acidic residues) spans leucine 60–glycine 86. Repeat copies occupy residues proline 97 to aspartate 107, proline 108 to aspartate 118, proline 119 to aspartate 129, proline 130 to aspartate 140, proline 141 to aspartate 151, proline 152 to aspartate 162, proline 163 to aspartate 173, proline 174 to aspartate 184, proline 185 to aspartate 195, proline 196 to aspartate 206, proline 207 to aspartate 217, and proline 218 to aspartate 228. Residues proline 97–glycine 239 form a 13 X 11 AA approximate tandem repeats of P-A-K-A-S-Q-G-G-L-E-D region. One copy of the 13; approximate repeat lies at proline 229–glycine 239. Residues glycine 239–isoleucine 257 are compositionally biased toward basic and acidic residues.

Its subcellular location is the parasitophorous vacuole. Its function is as follows. S antigens are soluble heat-stable proteins present in the sera of some infected individuals. This Plasmodium falciparum (isolate FC27 / Papua New Guinea) protein is S-antigen protein.